We begin with the raw amino-acid sequence, 391 residues long: Chaperone protein DnaJ (391 aa).

One can recognise a J domain in the interval 2 to 67 (DYYDVLGVSK…QKRESYDRYG (66 aa)). Residues 148–226 (GVEKELLVSG…CRGQGRVKDK (79 aa)) form a CR-type zinc finger. Zn(2+) contacts are provided by Cys-161, Cys-164, Cys-178, Cys-181, Cys-200, Cys-203, Cys-214, and Cys-217. CXXCXGXG motif repeat units follow at residues 161–168 (CTTCSGSG), 178–185 (CERCKGSG), 200–207 (CPECGGEG), and 214–221 (CSNCRGQG).

This sequence belongs to the DnaJ family. In terms of assembly, homodimer. Zn(2+) is required as a cofactor.

The protein localises to the cytoplasm. Participates actively in the response to hyperosmotic and heat shock by preventing the aggregation of stress-denatured proteins and by disaggregating proteins, also in an autonomous, DnaK-independent fashion. Unfolded proteins bind initially to DnaJ; upon interaction with the DnaJ-bound protein, DnaK hydrolyzes its bound ATP, resulting in the formation of a stable complex. GrpE releases ADP from DnaK; ATP binding to DnaK triggers the release of the substrate protein, thus completing the reaction cycle. Several rounds of ATP-dependent interactions between DnaJ, DnaK and GrpE are required for fully efficient folding. Also involved, together with DnaK and GrpE, in the DNA replication of plasmids through activation of initiation proteins. The polypeptide is Chaperone protein DnaJ (Chlamydia felis (strain Fe/C-56) (Chlamydophila felis)).